We begin with the raw amino-acid sequence, 705 residues long: Voltage-dependent calcium channel beta subunit-associated regulatory protein (705 aa).

Over 1–45 (MQPTATMATAATTTTTTTATVALTTSWDNATGRPTAEPDPILDNY) the chain is Extracellular. The N-linked (GlcNAc...) asparagine glycan is linked to asparagine 29. A helical; Signal-anchor for type III membrane protein membrane pass occupies residues 46-66 (VLLVVVMSLFVGGTLVVLSGV). The Cytoplasmic segment spans residues 67–705 (LLLCKRCWDV…APTSPDHSPA (639 aa)). 2 disordered regions span residues 91–113 (TTTY…EDPE) and 212–284 (GKAL…GSGA). The segment covering 245 to 254 (PSASSDSGEG) has biased composition (polar residues). Gly residues predominate over residues 267–284 (GGPGAAAGPGEAGPGSGA). A phosphoserine mark is found at serine 299 and serine 304. Disordered stretches follow at residues 316–353 (PSQR…DAPQ), 369–436 (FPHP…SYRD), 448–540 (AAAS…RRDY), and 559–655 (HFDD…CPGS). Over residues 344–353 (TEQEEGDAPQ) the composition is skewed to acidic residues. The segment covering 371–382 (HPRPFLASPPPA) has biased composition (pro residues). Residues 383-397 (LGRLEAAEAAGGASP) are compositionally biased toward low complexity. Residues 479–488 (AFPPPSPPAP) show a composition bias toward pro residues. The span at 489 to 499 (RPKDGEARRLL) shows a compositional bias: basic and acidic residues. 2 positions are modified to phosphoserine: serine 507 and serine 528. The segment covering 567–585 (ARHRARAHPHARKQWQRGR) has biased composition (basic residues). Positions 591 to 614 (GARAAPALAGTPAPPAGAARPARA) are enriched in low complexity. Serine 621 carries the post-translational modification Phosphoserine. Threonine 698 is modified (phosphothreonine). Residues serine 699 and serine 703 each carry the phosphoserine modification.

Interacts with voltage-dependent calcium channels CACNB1, CACNB2, CACNB3 and CACNB4 beta subunits; prevents their interaction with the CACNA1C alpha subunit thereby negatively regulating the activity of the corresponding calcium channels.

The protein resides in the cytoplasmic vesicle. It localises to the secretory vesicle. It is found in the synaptic vesicle membrane. Its subcellular location is the cell membrane. The protein localises to the cell projection. The protein resides in the growth cone. Negatively regulates voltage-gated calcium channels by preventing the interaction between their alpha and beta subunits. Thereby, negatively regulates calcium channels activity at the plasma membrane and indirectly inhibits calcium-regulated exocytosis. The protein is Voltage-dependent calcium channel beta subunit-associated regulatory protein of Homo sapiens (Human).